Reading from the N-terminus, the 1066-residue chain is DNA primase (1066 aa).

Positions 694–727 (DGPSAGGDDGDGDWFPDAGGPGDEEWEEDTDPMD) are disordered. The span at 715 to 725 (GDEEWEEDTDP) shows a compositional bias: acidic residues. A CHC2-type zinc finger spans residues 995–1035 (CLRFKHGRASRATARTFLALSVGTNNRLCASLCQQCFATKC).

It belongs to the herpesviridae DNA primase family. As to quaternary structure, associates with the helicase and the primase-associated factor to form the helicase-primase factor.

The protein localises to the host nucleus. In terms of biological role, essential component of the helicase/primase complex. Unwinds the DNA at the replication forks and generates single-stranded DNA for both leading and lagging strand synthesis. The primase initiates primer synthesis and thereby produces large amount of short RNA primers on the lagging strand that the polymerase elongates using dNTPs. The polypeptide is DNA primase (Human herpesvirus 2 (strain HG52) (HHV-2)).